A 74-amino-acid polypeptide reads, in one-letter code: MTNVYSLDGILVFGLLFVCTCAYFKKVPRLKTWLLSEKKGVWGVFYKAAVIGTRLHAAVAIACIVMAFYVLFIK.

An N-terminal signal peptide occupies residues 1–22; it reads MTNVYSLDGILVFGLLFVCTCA. At 23–52 the chain is on the extracellular side; the sequence is YFKKVPRLKTWLLSEKKGVWGVFYKAAVIG. Residues 53–73 form a helical membrane-spanning segment; the sequence is TRLHAAVAIACIVMAFYVLFI. Lysine 74 is a topological domain (cytoplasmic).

This sequence belongs to the KISH family.

The protein localises to the golgi apparatus membrane. Functionally, involved in the early part of the secretory pathway. This chain is Protein kish-B (TMEM167B), found in Bos taurus (Bovine).